Reading from the N-terminus, the 430-residue chain is Histidine--tRNA ligase (430 aa).

This sequence belongs to the class-II aminoacyl-tRNA synthetase family. As to quaternary structure, homodimer.

It localises to the cytoplasm. It carries out the reaction tRNA(His) + L-histidine + ATP = L-histidyl-tRNA(His) + AMP + diphosphate + H(+). The sequence is that of Histidine--tRNA ligase from Gloeothece citriformis (strain PCC 7424) (Cyanothece sp. (strain PCC 7424)).